Consider the following 98-residue polypeptide: NADH-ubiquinone oxidoreductase chain 4L (98 aa).

3 helical membrane passes run 1–21 (MSLT…GLLL), 29–49 (SLLC…MTIL), and 61–81 (IILL…LVMV).

This sequence belongs to the complex I subunit 4L family. Core subunit of respiratory chain NADH dehydrogenase (Complex I) which is composed of 45 different subunits.

It localises to the mitochondrion inner membrane. It catalyses the reaction a ubiquinone + NADH + 5 H(+)(in) = a ubiquinol + NAD(+) + 4 H(+)(out). In terms of biological role, core subunit of the mitochondrial membrane respiratory chain NADH dehydrogenase (Complex I) which catalyzes electron transfer from NADH through the respiratory chain, using ubiquinone as an electron acceptor. Part of the enzyme membrane arm which is embedded in the lipid bilayer and involved in proton translocation. The protein is NADH-ubiquinone oxidoreductase chain 4L (MT-ND4L) of Vampyrodes caraccioli (Great stripe-faced bat).